A 187-amino-acid polypeptide reads, in one-letter code: Major allergen Equ c 1 (187 aa).

The segment at residues 1-15 is a signal peptide (or 16, or 21); it reads MKLLLLCLGLILVCA. N-linked (GlcNAc...) asparagine glycosylation is found at Asn-53 and Asn-68. Residues Cys-83 and Cys-176 are joined by a disulfide bond.

It belongs to the calycin superfamily. Lipocalin family. Homodimer. Post-translationally, several N-terminal ends may be due to cleavage by signal peptidase at different sites or may be generated by proteolytic processing of the secreted protein. In terms of processing, analysis of the sugar composition shows the presence of GalNAc, Gal, NeuAc, GlcNAc, and Man. May be also O-glycosylated. In terms of tissue distribution, expressed in liver and in sublingual and submaxillary salivary glands. Highly concentrated in secretory fluid such as saliva and urine as well as in hair dandruff extract.

It localises to the secreted. The protein is Major allergen Equ c 1 of Equus caballus (Horse).